We begin with the raw amino-acid sequence, 458 residues long: Argininosuccinate lyase (458 aa).

The protein belongs to the lyase 1 family. Argininosuccinate lyase subfamily.

It is found in the cytoplasm. The enzyme catalyses 2-(N(omega)-L-arginino)succinate = fumarate + L-arginine. Its pathway is amino-acid biosynthesis; L-arginine biosynthesis; L-arginine from L-ornithine and carbamoyl phosphate: step 3/3. This chain is Argininosuccinate lyase, found in Salmonella typhi.